We begin with the raw amino-acid sequence, 498 residues long: Pre-glycoprotein polyprotein GP complex (498 aa).

Glycine 2 carries N-myristoyl glycine; by host lipidation. Topologically, residues 2–17 (GQIVTMFEALPHIIDE) are extracellular. Residues 18-33 (VINIVIIVLIVITGIK) form a helical membrane-spanning segment. The Cytoplasmic segment spans residues 34 to 58 (AVYNFATCGIFALISFLLLAGRSCG). Cysteine 57 serves as a coordination point for Zn(2+). At 59–438 (MYGLKGPDIY…QGSTPLALMD (380 aa)) the chain is on the extracellular side. Asparagine 85, asparagine 95, asparagine 114, asparagine 124, and asparagine 171 each carry an N-linked (GlcNAc...) asparagine; by host glycan. Disulfide bonds link cysteine 92-cysteine 239, cysteine 123-cysteine 160, cysteine 184-cysteine 220, cysteine 285-cysteine 298, cysteine 307-cysteine 316, and cysteine 370-cysteine 391. Asparagine 232 is a glycosylation site (N-linked (GlcNAc...) asparagine; by host). N-linked (GlcNAc...) asparagine; by host glycosylation is found at asparagine 371, asparagine 396, and asparagine 401. Residues 439-459 (LLMFSTSAYLVSIFLHLVKIP) traverse the membrane as a helical segment. The Cytoplasmic portion of the chain corresponds to 460–498 (THRHIKGGSCPKPHRLTNKGICSCGAFKVPGVKTVWKRR). Residues histidine 461, histidine 463, cysteine 469, histidine 473, cysteine 481, and cysteine 483 each coordinate Zn(2+).

This sequence belongs to the arenaviridae GPC protein family. As to quaternary structure, interacts with glycoprotein G2. Part of the GP complex (GP-C) together with glycoprotein G1 and glycoprotein G2. The GP-complex interacts with protein Z, which interacts with ribonucleocapsid; these interactions may induce virion budding. In terms of assembly, homotrimer; disulfide-linked. In pre-fusion state, G1 homotrimers bind G2 homotrimers via ionic interactions. Part of the GP complex (GP-C) together with glycoprotein G2 and the stable signal peptide. Interacts with the primary host receptor DAG1 on the cell surface. The GP-complex interacts with protein Z, which interacts with ribonucleocapsid; these interactions may induce virion budding. Homotrimer. Interacts with the stable signal peptide. In pre-fusion state, G2 homotrimers bind G1 homotrimers via ionic interactions. Part of the GP complex (GP-C) together with glycoprotein G1 and the stable signal peptide. Acidification in the endosome triggers rearrangements, which ultimately leads to a 6 helix bundle formed by the two heptad repeat domains (HR1 and HR2) in post-fusion state. The GP-complex interacts with protein Z, which interacts with ribonucleocapsid; these interactions may induce virion budding. Post-translationally, specific enzymatic cleavages in vivo yield mature proteins. GP-C polyprotein is cleaved in the endoplasmic reticulum by the host protease MBTPS1. Only cleaved glycoprotein is incorporated into virions. The SSP remains stably associated with the GP complex following cleavage by signal peptidase and plays crucial roles in the trafficking of GP through the secretory pathway. In terms of processing, myristoylation is necessary for GP2-mediated fusion activity. Inhibition of host myristoylation by the compound DDD85646 leads to the abrogation of GP2-mediated fusion upon exposure to low pH and inhibition of viral multiplication.

Its subcellular location is the virion membrane. The protein resides in the host endoplasmic reticulum membrane. It localises to the host Golgi apparatus membrane. It is found in the host cell membrane. Functionally, functions as a cleaved signal peptide that is retained as the third component of the GP complex (GP-C). Helps to stabilize the spike complex in its native conformation. The SSP is required for efficient glycoprotein expression, post-translational maturation cleavage of G1 and G2, glycoprotein transport to the cell surface plasma membrane, formation of infectious virus particles, and acid pH-dependent glycoprotein-mediated cell fusion. In terms of biological role, forms the virion spikes together with glycoprotein G2. The glycoprotein spike trimers are connected to the underlying matrix. Interacts with the host receptor. Mediates virus attachment to the host primary receptor alpha-dystroglycan DAG1 (alpha-DG) at the cell surface. Down-modulates host DAG1. Its function is as follows. Forms the virion spikes together with glycoprotein G1. The glycoprotein spike trimers are connected to the underlying matrix. Class I viral fusion protein that directs fusion of viral and host endosomal membranes, leading to delivery of the nucleocapsid into the cytoplasm. Membrane fusion is mediated by irreversible conformational changes induced by acidification. This is Pre-glycoprotein polyprotein GP complex from Homo sapiens (Human).